The chain runs to 602 residues: Raftlin (602 aa).

Glycine 2 is lipidated: N-myristoyl glycine. Cysteine 3 is lipidated: S-palmitoyl cysteine. A compositionally biased stretch (polar residues) spans threonine 178 to asparagine 195. 3 disordered regions span residues threonine 178 to lysine 282, lysine 451 to glutamate 495, and asparagine 524 to proline 567. 2 stretches are compositionally biased toward basic and acidic residues: residues proline 197–aspartate 209 and proline 244–proline 265. Over residues lysine 468–lysine 477 the composition is skewed to basic residues.

It belongs to the raftlin family.

The protein resides in the cell membrane. Functionally, may play a pivotal role in the formation and/or maintenance of lipid rafts. May regulate B-cell antigen receptor-mediated signaling. The sequence is that of Raftlin (RFTN1) from Gallus gallus (Chicken).